Here is a 309-residue protein sequence, read N- to C-terminus: Ribokinase (309 aa).

Residues 14–16 (NAD), 42–46 (GKGAN), and E143 contribute to the substrate site. Residues N187 and 223 to 228 (TLGSRG) each bind ATP. K(+) is bound by residues D249 and I251. Residues 254 to 255 (GD) and H279 each bind ATP. D255 serves as a coordination point for substrate. D255 (proton acceptor) is an active-site residue. A285, R288, G290, and S294 together coordinate K(+).

Belongs to the carbohydrate kinase PfkB family. Ribokinase subfamily. As to quaternary structure, homodimer. Mg(2+) serves as cofactor.

The protein localises to the cytoplasm. The catalysed reaction is D-ribose + ATP = D-ribose 5-phosphate + ADP + H(+). The protein operates within carbohydrate metabolism; D-ribose degradation; D-ribose 5-phosphate from beta-D-ribopyranose: step 2/2. Activated by a monovalent cation that binds near, but not in, the active site. The most likely occupant of the site in vivo is potassium. Ion binding induces a conformational change that may alter substrate affinity. Functionally, catalyzes the phosphorylation of ribose at O-5 in a reaction requiring ATP and magnesium. The resulting D-ribose-5-phosphate can then be used either for sythesis of nucleotides, histidine, and tryptophan, or as a component of the pentose phosphate pathway. The chain is Ribokinase from Escherichia coli O157:H7.